Consider the following 437-residue polypeptide: Phosphomethylpyrimidine synthase (437 aa).

Substrate contacts are provided by residues Asn-69, Met-98, Tyr-127, His-163, 185–187, 226–229, and Glu-265; these read SRG and DACR. Residue His-269 participates in Zn(2+) binding. Tyr-292 is a binding site for substrate. His-333 provides a ligand contact to Zn(2+). Positions 409, 412, and 416 each coordinate [4Fe-4S] cluster.

It belongs to the ThiC family. Requires [4Fe-4S] cluster as cofactor.

The enzyme catalyses 5-amino-1-(5-phospho-beta-D-ribosyl)imidazole + S-adenosyl-L-methionine = 4-amino-2-methyl-5-(phosphooxymethyl)pyrimidine + CO + 5'-deoxyadenosine + formate + L-methionine + 3 H(+). It participates in cofactor biosynthesis; thiamine diphosphate biosynthesis. Functionally, catalyzes the synthesis of the hydroxymethylpyrimidine phosphate (HMP-P) moiety of thiamine from aminoimidazole ribotide (AIR) in a radical S-adenosyl-L-methionine (SAM)-dependent reaction. The chain is Phosphomethylpyrimidine synthase from Clostridium kluyveri (strain NBRC 12016).